The sequence spans 248 residues: MGILKKTIFIGGIYGLGVYIGAVAWRLRKDVLNYESRQKSDLLIPNSNSISIYNQIADKYSRKITREEIFSGIYFLRYFLLRNAKGDVLEVGSGPGTNFPFYKWKKINTLTLVEPAEKMREIADARAKKKVPPNVLYRQFADLRQLPPNQSYDTIIQTFCICSQEKAVEQLNNYRSLLRSDGRILLIEHGKGKYKFLNRILNAYAESHYESWGCVWNRDIEQLLEDSELTIDSCKRFNFGTTYVIEAH.

A helical membrane pass occupies residues 7–25; that stretch reads TIFIGGIYGLGVYIGAVAW.

The protein belongs to the methyltransferase superfamily. METL family.

Its subcellular location is the mitochondrion inner membrane. In terms of biological role, probable methyltransferase. This is an uncharacterized protein from Schizosaccharomyces pombe (strain 972 / ATCC 24843) (Fission yeast).